Reading from the N-terminus, the 384-residue chain is G protein-coupled receptor 88 (384 aa).

The Extracellular portion of the chain corresponds to 1 to 35 (MTNSSSTSTSTTTGGSLLLLCEEEESWAGRRIPVS). Residue Asn-3 is glycosylated (N-linked (GlcNAc...) asparagine). A helical membrane pass occupies residues 36–56 (LLYSGLAIGGTLANGMVIYLV). Over 57-73 (SSFRKLQTTSNAFIVNG) the chain is Cytoplasmic. A helical transmembrane segment spans residues 74–94 (CAADLSVCALWMPQEAVLGLL). At 95–116 (PSGSAEPPGDWDGGGGSYRLLR) the chain is on the extracellular side. The chain crosses the membrane as a helical span at residues 117-136 (GGLLGLGLTVSLLSHCLVAL). Topologically, residues 137-158 (NRYLLITRAPATYQVLYQRRHT) are cytoplasmic. Residues 159–179 (VGMLALSWALALGLVLLLPPW) form a helical membrane-spanning segment. The Extracellular portion of the chain corresponds to 180–195 (APKPGAEPPQVHYPAL). Residues 196–216 (LAAGALLAQTALLLHCYLGIV) form a helical membrane-spanning segment. At 217 to 285 (RRVRVSVKRV…RAQRRLSGLS (69 aa)) the chain is on the cytoplasmic side. A helical membrane pass occupies residues 286-306 (VLLLCCVFLLATQPLVWVSLA). The Extracellular segment spans residues 307 to 310 (SGFS). The chain crosses the membrane as a helical span at residues 311–331 (LPVPWGVQAASWLLCCALSAL). Residues 332–384 (NPLLYTWRNEEFRRSVRSVLPGVGDAAAAAAAATAVPAMSQAQLGTRAAGQHW) are Cytoplasmic-facing.

It belongs to the G-protein coupled receptor 1 family. In terms of tissue distribution, expressed predominantly in the striatum.

It localises to the cell membrane. The protein localises to the cell projection. It is found in the cilium membrane. The protein resides in the cytoplasm. Its subcellular location is the nucleus. Functionally, orphan G protein-coupled receptor implicated in a large repertoire of behavioral responses that engage motor activities, spatial learning, and emotional processing. May play a role in the regulation of cognitive and motor function. Couples with the heterotrimeric G protein complex of the G(i) subfamily, consisting of GNAI1, GNB1 and GNG2, thereby acting through a G(i)-mediated pathway. Plays a role in the attenuation of D1 dopamine receptor (D1R)-mediated cAMP response in ciliated cells. In on-ciliated cells, involved in the inhibition of the beta-2 adrenergic receptor (B2AR) response. In Mus musculus (Mouse), this protein is G protein-coupled receptor 88 (Gpr88).